We begin with the raw amino-acid sequence, 271 residues long: Thiazole synthase (271 aa).

The active-site Schiff-base intermediate with DXP is the Lys95. 1-deoxy-D-xylulose 5-phosphate contacts are provided by residues Gly156, 182–183 (AG), and 204–205 (NT).

The protein belongs to the ThiG family. As to quaternary structure, homotetramer. Forms heterodimers with either ThiH or ThiS.

It localises to the cytoplasm. It catalyses the reaction [ThiS sulfur-carrier protein]-C-terminal-Gly-aminoethanethioate + 2-iminoacetate + 1-deoxy-D-xylulose 5-phosphate = [ThiS sulfur-carrier protein]-C-terminal Gly-Gly + 2-[(2R,5Z)-2-carboxy-4-methylthiazol-5(2H)-ylidene]ethyl phosphate + 2 H2O + H(+). The protein operates within cofactor biosynthesis; thiamine diphosphate biosynthesis. Catalyzes the rearrangement of 1-deoxy-D-xylulose 5-phosphate (DXP) to produce the thiazole phosphate moiety of thiamine. Sulfur is provided by the thiocarboxylate moiety of the carrier protein ThiS. In vitro, sulfur can be provided by H(2)S. In Yersinia pseudotuberculosis serotype O:1b (strain IP 31758), this protein is Thiazole synthase.